The primary structure comprises 188 residues: Phosphoribosylglycinamide formyltransferase (188 aa).

Residue 12–14 (GSN) participates in N(1)-(5-phospho-beta-D-ribosyl)glycinamide binding. Residues Lys66, 91-94 (MRLI), and Asn108 each bind (6R)-10-formyltetrahydrofolate. The Proton donor role is filled by His110.

It belongs to the GART family.

The enzyme catalyses N(1)-(5-phospho-beta-D-ribosyl)glycinamide + (6R)-10-formyltetrahydrofolate = N(2)-formyl-N(1)-(5-phospho-beta-D-ribosyl)glycinamide + (6S)-5,6,7,8-tetrahydrofolate + H(+). The protein operates within purine metabolism; IMP biosynthesis via de novo pathway; N(2)-formyl-N(1)-(5-phospho-D-ribosyl)glycinamide from N(1)-(5-phospho-D-ribosyl)glycinamide (10-formyl THF route): step 1/1. Catalyzes the transfer of a formyl group from 10-formyltetrahydrofolate to 5-phospho-ribosyl-glycinamide (GAR), producing 5-phospho-ribosyl-N-formylglycinamide (FGAR) and tetrahydrofolate. In Staphylococcus aureus (strain MSSA476), this protein is Phosphoribosylglycinamide formyltransferase.